A 308-amino-acid chain; its full sequence is Alpha/beta hydrolase domain-containing protein WAV2 (308 aa).

The chain crosses the membrane as a helical span at residues 6–26 (SALFYGFGGIVVAGVALLVAF). Residues Ser-159, Asp-243, and Arg-308 each act as charge relay system in the active site.

This sequence belongs to the serine esterase family. As to expression, expressed in roots, rosette leaves, stems and flowers.

It localises to the cell membrane. Its function is as follows. Involved in the regulation of root growth. Involved in the suppression of the root bending in response to touch stimuli, gravity and light. Negatively regulates stimulus-induced root bending through inhibition of root tip rotation. The chain is Alpha/beta hydrolase domain-containing protein WAV2 from Arabidopsis thaliana (Mouse-ear cress).